The primary structure comprises 352 residues: Transcription factor BHLH156 (352 aa).

Residues 59–141 (GGDDDDNGGV…RSKTIVSERK (83 aa)) are disordered. The interval 130–143 (RDRSKTIVSERKRR) is basic motif. The region spanning 130–179 (RDRSKTIVSERKRRVRMKEKLYELRALVPNITKMDKASIIADAVVYVKDL) is the bHLH domain. The helix-loop-helix motif stretch occupies residues 144–179 (VRMKEKLYELRALVPNITKMDKASIIADAVVYVKDL). Residues 194 to 216 (EEARPIRPPPPSAAAQRPQRQPR) form a disordered region. Low complexity predominate over residues 206–216 (AAAQRPQRQPR).

It belongs to the bHLH protein family. As to quaternary structure, forms homodimers. Interacts with IRO2 in the nucleus. As to expression, expressed in the meristematic zone of lateral and primary roots.

Its subcellular location is the nucleus. Its function is as follows. Transcription factor involved in positive regulation of genes involved in strategy II iron acquisition, including genes for mugineic acid (MA) family phytosiderophores biosynthesis, and genes involved in S-adenosylmethionine cycle and iron transport. May play a role in the regulation of iron deficiency response by promoting the nuclear localization of IRO2. Possesses transactivation activity in yeast. This Oryza sativa subsp. japonica (Rice) protein is Transcription factor BHLH156.